Consider the following 578-residue polypeptide: Probable multidrug ABC transporter ATP-binding protein YbhF (578 aa).

2 ABC transporter domains span residues 6-237 (ITLN…LMTS) and 330-559 (IEAK…PDPT). ATP-binding positions include 40-47 (GPDGAGKT) and 362-369 (GPNGAGKS).

It belongs to the ABC transporter superfamily. The complex is probably composed of two ATP-binding proteins (YbhF) and two transmembrane proteins (YbhR and YbhS).

Part of the ABC transporter complex YbhFSR that could be involved in efflux of cefoperazone. Probably responsible for energy coupling to the transport system. The protein is Probable multidrug ABC transporter ATP-binding protein YbhF (ybhF) of Escherichia coli (strain K12).